We begin with the raw amino-acid sequence, 69 residues long: Brevinin-1CG5 (69 aa).

The N-terminal stretch at 1 to 22 (MFTLKKSLLLLFFLGTINLSLC) is a signal peptide. A propeptide spans 23–43 (EQERNAEEERRDDDEMDVEVE) (removed in mature form). The cysteines at positions 63 and 69 are disulfide-linked.

Belongs to the frog skin active peptide (FSAP) family. Brevinin subfamily. Expressed by the skin glands.

The protein resides in the secreted. Functionally, antimicrobial peptide active against a variety of Gram-positive and Gram-negative bacterial strains. Has antifungal activity against C.albicans ATCC 10231 and a slime mold isolate. Has hemolytic activity against human erythrocytes. The sequence is that of Brevinin-1CG5 from Amolops chunganensis (Chungan torrent frog).